The chain runs to 196 residues: Chromophore lyase CpcS/CpeS 2 (196 aa).

The protein belongs to the CpcS/CpeS biliprotein lyase family.

Covalently attaches a chromophore to Cys residue(s) of phycobiliproteins. In Trichodesmium erythraeum (strain IMS101), this protein is Chromophore lyase CpcS/CpeS 2.